A 162-amino-acid chain; its full sequence is MGMVSKRKKMHYGDTHLQRRWRVRNRRRDLDQIDDDLQTRSGELINQNVDLDKPGFAQFYCVHCAKYFIDDTAMQAHFRTKVHKRRLKALEIEPYSIEEAERAAGRGSFVKPKKRAMETQPSKEDVVAGKRIRVEVVPEDTDATDSPSTSKTKRKKVEKMET.

The C2H2-type zinc finger occupies 59-83; that stretch reads FYCVHCAKYFIDDTAMQAHFRTKVH. The segment at 110–162 is disordered; the sequence is VKPKKRAMETQPSKEDVVAGKRIRVEVVPEDTDATDSPSTSKTKRKKVEKMET. Residues 115 to 136 are compositionally biased toward basic and acidic residues; sequence RAMETQPSKEDVVAGKRIRVEV. A compositionally biased stretch (basic residues) spans 151–162; sequence KTKRKKVEKMET.

Belongs to the ZNF593/BUD20 C2H2-type zinc-finger protein family. As to quaternary structure, associates with pre-60S ribosomal particles; released from the pre-60S particle very early in the cytoplasm.

The protein localises to the nucleus. Its subcellular location is the cytoplasm. Involved in pre-60S ribosomal particles maturation by promoting the nuclear export of the 60S ribosome. The protein is Zinc finger protein 593 homolog of Drosophila melanogaster (Fruit fly).